A 127-amino-acid polypeptide reads, in one-letter code: Holo-[acyl-carrier-protein] synthase (127 aa).

Positions 7 and 56 each coordinate Mg(2+).

Belongs to the P-Pant transferase superfamily. AcpS family. Requires Mg(2+) as cofactor.

The protein resides in the cytoplasm. The catalysed reaction is apo-[ACP] + CoA = holo-[ACP] + adenosine 3',5'-bisphosphate + H(+). In terms of biological role, transfers the 4'-phosphopantetheine moiety from coenzyme A to a Ser of acyl-carrier-protein. The polypeptide is Holo-[acyl-carrier-protein] synthase (Leptospira biflexa serovar Patoc (strain Patoc 1 / Ames)).